A 307-amino-acid polypeptide reads, in one-letter code: Ornithine carbamoyltransferase (307 aa).

Carbamoyl phosphate-binding positions include 55–58 (STRT), Gln-82, Arg-106, and 133–136 (HPCQ). L-ornithine contacts are provided by residues Asn-164, Asp-224, and 228-229 (SM). Carbamoyl phosphate contacts are provided by residues 263 to 264 (CL) and Arg-291.

It belongs to the aspartate/ornithine carbamoyltransferase superfamily. OTCase family.

It is found in the cytoplasm. The catalysed reaction is carbamoyl phosphate + L-ornithine = L-citrulline + phosphate + H(+). Its pathway is amino-acid biosynthesis; L-arginine biosynthesis; L-arginine from L-ornithine and carbamoyl phosphate: step 1/3. In terms of biological role, reversibly catalyzes the transfer of the carbamoyl group from carbamoyl phosphate (CP) to the N(epsilon) atom of ornithine (ORN) to produce L-citrulline. This chain is Ornithine carbamoyltransferase, found in Bradyrhizobium diazoefficiens (strain JCM 10833 / BCRC 13528 / IAM 13628 / NBRC 14792 / USDA 110).